A 173-amino-acid polypeptide reads, in one-letter code: Disulfide bond formation protein B (173 aa).

Residues 1–14 (MIEFLRRIAAHRLA) lie on the Cytoplasmic side of the membrane. A helical transmembrane segment spans residues 15 to 31 (WSLLAASALFLELSALF). Residues 32–49 (FQHVLGLHPCVMCVYERI) are Periplasmic-facing. A disulfide bridge links cysteine 41 with cysteine 44. The helical transmembrane segment at 50 to 65 (ATLGVLTAGLLGMVAP) threads the bilayer. Topologically, residues 66–72 (QKWYVRW) are cytoplasmic. A helical membrane pass occupies residues 73 to 90 (SALLLWGSSAFWGLKLAL). Topologically, residues 91–145 (KHVDYQVNPSPFNVCEGFVDFPSWAPLDQWIPWMFYPDGDCSEVTWQFLSFSMPQ) are periplasmic. Cysteine 105 and cysteine 131 are disulfide-bonded. Residues 146-164 (WLVAIFAVYLLVFVVVAIG) form a helical membrane-spanning segment. Residues 165–173 (NLVKGRCCS) are Cytoplasmic-facing.

It belongs to the DsbB family.

Its subcellular location is the cell inner membrane. Required for disulfide bond formation in some periplasmic proteins. Acts by oxidizing the DsbA protein. The chain is Disulfide bond formation protein B from Aeromonas hydrophila subsp. hydrophila (strain ATCC 7966 / DSM 30187 / BCRC 13018 / CCUG 14551 / JCM 1027 / KCTC 2358 / NCIMB 9240 / NCTC 8049).